A 108-amino-acid polypeptide reads, in one-letter code: Con-Ins K1 (108 aa).

The first 24 residues, 1 to 24 (MTTSSYFLLVALGLLLYVCQSSFG), serve as a signal peptide directing secretion. The propeptide occupies 25 to 28 (SPHT). Cystine bridges form between Cys-41–Cys-90, Cys-53–Cys-103, and Cys-89–Cys-94. Position 44 is a 4-carboxyglutamate (Glu-44). A propeptide spans 57–83 (RKRRGFPSMLKARAKRNEAFLLQRDGR) (c peptide). Glu-87 carries the post-translational modification 4-carboxyglutamate. At Gln-107 the chain carries Glutamine amide.

This sequence belongs to the insulin family. Heterodimer of A and B chains; disulfide-linked. In terms of tissue distribution, expressed by the venom gland.

The protein localises to the secreted. Its function is as follows. This venom insulin, from a fish-hunting cone snail, facilitates prey capture by rapidly inducing hypoglycemic shock. It is one of the smallest known insulin found in nature and lacks the C-terminal segment of the B chain that, in human insulin, mediates engagement of the insulin receptor (INSR) and assembly of the hormone's hexameric storage form. Despite lacking this segment, it both binds and activates human insulin receptor (long isoform (HIR-B)) with a moderate potency (EC(50)=30.45 nM). In vivo, intraperitoneal injection of this peptide into zebrafish lowers blood glucose with a lower potency than human insulin. In addition, when applied to water, this peptide reduces overall locomotor activity of zebrafish larvae, observed as a significant decrease in the percentage of time spent swimming and movement frequency. When tested on a mouse model of diabetes, this insulin also lowers blood glucose with a 20-fold lower potency than human insulin. In Conus kinoshitai (Kinoshita's cone), this protein is Con-Ins K1.